We begin with the raw amino-acid sequence, 270 residues long: MSRIQTRFAALKKEGRGALIPYLQACDPDYDTSLELLRAMPAAGADLIEIGVPFSDPSADGPTIQAAALRGLKAGATLGRVLEMVRAFRETDNETPIVLMGYLNPIDSYGPAEFCFDAAQAGVDGIIVVDMPTEEADLLDAHAREADLDIISLVAPTTSNSRLFHVLREASGFVYYVSITGITGTNSASAADLEKALPRIREATSLPVAIGFGISTPEQARTASRIGDAAVVASALIKTMASTLENGQATERTVPAVLKQLEGLAAAVRA.

Catalysis depends on proton acceptor residues Glu-49 and Asp-60.

The protein belongs to the TrpA family. As to quaternary structure, tetramer of two alpha and two beta chains.

The catalysed reaction is (1S,2R)-1-C-(indol-3-yl)glycerol 3-phosphate + L-serine = D-glyceraldehyde 3-phosphate + L-tryptophan + H2O. It functions in the pathway amino-acid biosynthesis; L-tryptophan biosynthesis; L-tryptophan from chorismate: step 5/5. In terms of biological role, the alpha subunit is responsible for the aldol cleavage of indoleglycerol phosphate to indole and glyceraldehyde 3-phosphate. The chain is Tryptophan synthase alpha chain from Gluconobacter oxydans (strain 621H) (Gluconobacter suboxydans).